The primary structure comprises 369 residues: Chaperone protein DnaJ (369 aa).

A J domain is found at S4–G69. Residues G130–D207 form a CR-type zinc finger. Residues C143, C146, C159, C162, C181, C184, C195, and C198 each contribute to the Zn(2+) site. 4 CXXCXGXG motif repeats span residues C143–G150, C159–G166, C181–G188, and C195–T202.

Belongs to the DnaJ family. In terms of assembly, homodimer. Requires Zn(2+) as cofactor.

The protein resides in the cytoplasm. Its function is as follows. Participates actively in the response to hyperosmotic and heat shock by preventing the aggregation of stress-denatured proteins and by disaggregating proteins, also in an autonomous, DnaK-independent fashion. Unfolded proteins bind initially to DnaJ; upon interaction with the DnaJ-bound protein, DnaK hydrolyzes its bound ATP, resulting in the formation of a stable complex. GrpE releases ADP from DnaK; ATP binding to DnaK triggers the release of the substrate protein, thus completing the reaction cycle. Several rounds of ATP-dependent interactions between DnaJ, DnaK and GrpE are required for fully efficient folding. Also involved, together with DnaK and GrpE, in the DNA replication of plasmids through activation of initiation proteins. The sequence is that of Chaperone protein DnaJ from Helicobacter pylori (strain J99 / ATCC 700824) (Campylobacter pylori J99).